The following is a 488-amino-acid chain: Ergochrome gene cluster transcriptional regulator CPUR_05433 (488 aa).

The tract at residues 1–29 (MDHSIGGRNCQSGGTTASAPRSTGSDEFP) is disordered. The segment covering 9 to 25 (NCQSGGTTASAPRSTGS) has biased composition (polar residues). Residues 36–63 (CHACSLSKVRCSKEKPSCSRCAKRGVPC) constitute a DNA-binding region (zn(2)-C6 fungal-type).

Its subcellular location is the nucleus. In terms of biological role, transcription factor; part of the gene cluster responsible for the typical purple-black color of the ergot sclerotia. The ergochrome gene cluster produces several ergot pigments including the yellow ergochrome secalonic acid and its derivatives, as well as the red anthraquinones endocrocin and clavorubin. The chain is Ergochrome gene cluster transcriptional regulator CPUR_05433 from Claviceps purpurea (strain 20.1) (Ergot fungus).